The chain runs to 239 residues: Urease accessory protein UreE (239 aa).

A disordered region spans residues 185 to 239; sequence VASPLDEPHGSGLHIHGIHSHGDGHSHSHDSHSHSHDSDHGHSHSHGDHDHDHKH. Positions 204-239 are enriched in basic and acidic residues; that stretch reads SHGDGHSHSHDSHSHSHDSDHGHSHSHGDHDHDHKH.

This sequence belongs to the UreE family.

It is found in the cytoplasm. Functionally, involved in urease metallocenter assembly. Binds nickel. Probably functions as a nickel donor during metallocenter assembly. The polypeptide is Urease accessory protein UreE (Yersinia frederiksenii).